A 295-amino-acid chain; its full sequence is Cyclin-G1 (295 aa).

Belongs to the cyclin family. Cyclin G subfamily. In terms of tissue distribution, high levels in skeletal muscle, ovary, kidney and colon.

It localises to the nucleus. In terms of biological role, may play a role in growth regulation. Is associated with G2/M phase arrest in response to DNA damage. May be an intermediate by which p53 mediates its role as an inhibitor of cellular proliferation. This is Cyclin-G1 (CCNG1) from Homo sapiens (Human).